We begin with the raw amino-acid sequence, 804 residues long: Leucine--tRNA ligase (804 aa).

The 'HIGH' region motif lies at 39–50 (PFPSGKGLHVGH). The short motif at 573–577 (KMSKS) is the 'KMSKS' region element. An ATP-binding site is contributed by Lys-576.

This sequence belongs to the class-I aminoacyl-tRNA synthetase family.

The protein localises to the cytoplasm. It catalyses the reaction tRNA(Leu) + L-leucine + ATP = L-leucyl-tRNA(Leu) + AMP + diphosphate. In Lactobacillus helveticus (strain DPC 4571), this protein is Leucine--tRNA ligase.